Reading from the N-terminus, the 233-residue chain is Large ribosomal subunit protein uL3 (233 aa).

The tract at residues Gly146–Gly171 is disordered. At Gln168 the chain carries N5-methylglutamine.

This sequence belongs to the universal ribosomal protein uL3 family. In terms of assembly, part of the 50S ribosomal subunit. Forms a cluster with proteins L14 and L19. Methylated by PrmB.

Functionally, one of the primary rRNA binding proteins, it binds directly near the 3'-end of the 23S rRNA, where it nucleates assembly of the 50S subunit. This chain is Large ribosomal subunit protein uL3, found in Bordetella bronchiseptica (strain ATCC BAA-588 / NCTC 13252 / RB50) (Alcaligenes bronchisepticus).